A 424-amino-acid chain; its full sequence is Dehydrogenase FUM7 (424 aa).

It belongs to the iron-containing alcohol dehydrogenase family. It depends on Fe cation as a cofactor.

Its pathway is mycotoxin biosynthesis. Its function is as follows. Dehydrogenase; part of the gene cluster that mediates the biosynthesis of fumonisins B1 (FB1), B2 (FB2), B3 (FB3), and B4 (FB4), which are carcinogenic mycotoxins. Within the pathway, FUM7 is involved the addition of the tricarballylic moieties to the carbon backbone. FUM7 dehydrogenase removes the C-3 hydroxyl of citrate to form tricarballylic acid either before or after the CoA activation by the FUM10 acyl-CoA synthetase and FUM14 catalyzed esterification of CoA-activated tricarballylic acid to the C-14 and C-15 hydroxyls of the fumonisin backbone. The biosynthesis starts with the FUM1-catalyzed carbon chain assembly from one molecule of acetyl-CoA, eight molecules of malonyl-CoA, and two molecules of methionine (in S-adenosyl form). The C18 polyketide chain is released from the enzyme by a nucleophilic attack of a carbanion, which is derived from R-carbon of alanine by decarboxylation, on the carbonyl carbon of polyketide acyl chain. This step is catalyzed by the pyridoxal 5'-phosphate-dependent aminoacyl transferase FUM8. The resultant 3-keto intermediate is then stereospecifically reduced to a 3-hydroxyl product by reductase FUM13. Subsequent oxidations at C-10 by the cytochrome P450 monooxygenase FUM2, C-14 and C-15 by FUM6, FUM12 or FUM15, tricarballylic esterification of the hydroxyl groups on C-14 and C-15 by acyltransferase FUM14, and C-5 hydroxylation by 2-keto-glutarate-dependent dioxygenase FUM3 furnish the biosynthesis of fumonisins. The tricarballylic moieties are most likely derived from the citric acid cycle, and their addition to the carbon backbone may involve FUM7, FUM10, FUM11 and FUM14. The polypeptide is Dehydrogenase FUM7 (Gibberella moniliformis (strain M3125 / FGSC 7600) (Maize ear and stalk rot fungus)).